Consider the following 397-residue polypeptide: L-asparaginase-like protein CG4372 (397 aa).

A signal peptide spans 1 to 22 (MLAQSCCLRLLILLLLFTTIGS). 3 disulfides stabilise this stretch: cysteine 90–cysteine 95, cysteine 189–cysteine 205, and cysteine 344–cysteine 371.

This sequence belongs to the Ntn-hydrolase family.

The protein is L-asparaginase-like protein CG4372 of Drosophila melanogaster (Fruit fly).